Reading from the N-terminus, the 204-residue chain is Probable chorismate pyruvate-lyase (204 aa).

Residues R75, L113, and E160 each contribute to the substrate site.

The protein belongs to the UbiC family.

Its subcellular location is the cytoplasm. It carries out the reaction chorismate = 4-hydroxybenzoate + pyruvate. The protein operates within cofactor biosynthesis; ubiquinone biosynthesis. Removes the pyruvyl group from chorismate, with concomitant aromatization of the ring, to provide 4-hydroxybenzoate (4HB) for the ubiquinone pathway. In Alcanivorax borkumensis (strain ATCC 700651 / DSM 11573 / NCIMB 13689 / SK2), this protein is Probable chorismate pyruvate-lyase.